The following is a 376-amino-acid chain: Alanine racemase (376 aa).

Lys-40 functions as the Proton acceptor; specific for D-alanine in the catalytic mechanism. Lys-40 carries the N6-(pyridoxal phosphate)lysine modification. A substrate-binding site is contributed by Arg-138. Catalysis depends on Tyr-270, which acts as the Proton acceptor; specific for L-alanine. Met-317 contributes to the substrate binding site.

The protein belongs to the alanine racemase family. The cofactor is pyridoxal 5'-phosphate.

It carries out the reaction L-alanine = D-alanine. Its pathway is amino-acid biosynthesis; D-alanine biosynthesis; D-alanine from L-alanine: step 1/1. In terms of biological role, catalyzes the interconversion of L-alanine and D-alanine. May also act on other amino acids. In Lactobacillus acidophilus (strain ATCC 700396 / NCK56 / N2 / NCFM), this protein is Alanine racemase (alr).